Here is a 397-residue protein sequence, read N- to C-terminus: Elongation factor Tu-1 (397 aa).

A tr-type G domain is found at Lys10–Glu206. Positions Gly19–Thr26 are G1. A GTP-binding site is contributed by Gly19 to Thr26. Thr26 provides a ligand contact to Mg(2+). The segment at Gly62–Ser66 is G2. The interval Asp83–Gly86 is G3. Residues Asp83 to His87 and Asn138 to Asp141 each bind GTP. The segment at Asn138–Asp141 is G4. The G5 stretch occupies residues Ser176–Leu178.

Belongs to the TRAFAC class translation factor GTPase superfamily. Classic translation factor GTPase family. EF-Tu/EF-1A subfamily. In terms of assembly, monomer.

Its subcellular location is the cytoplasm. It carries out the reaction GTP + H2O = GDP + phosphate + H(+). Functionally, GTP hydrolase that promotes the GTP-dependent binding of aminoacyl-tRNA to the A-site of ribosomes during protein biosynthesis. The protein is Elongation factor Tu-1 of Streptomyces coelicolor (strain ATCC BAA-471 / A3(2) / M145).